Consider the following 334-residue polypeptide: Holliday junction branch migration complex subunit RuvB (334 aa).

Positions 1–181 (MHDRLISGTE…FGIVQRLEFY (181 aa)) are large ATPase domain (RuvB-L). Residues Ile-20, Arg-21, Gly-62, Lys-65, Thr-66, Thr-67, 128–130 (EDY), Arg-171, Tyr-181, and Arg-218 each bind ATP. Thr-66 contributes to the Mg(2+) binding site. Residues 182–252 (SVEDLTHIVT…MAQRALDMLN (71 aa)) are small ATPAse domain (RuvB-S). The tract at residues 255 to 334 (KDGLDTLDRR…FGLTPPEPKN (80 aa)) is head domain (RuvB-H). Arg-310 and Arg-315 together coordinate DNA.

This sequence belongs to the RuvB family. In terms of assembly, homohexamer. Forms an RuvA(8)-RuvB(12)-Holliday junction (HJ) complex. HJ DNA is sandwiched between 2 RuvA tetramers; dsDNA enters through RuvA and exits via RuvB. An RuvB hexamer assembles on each DNA strand where it exits the tetramer. Each RuvB hexamer is contacted by two RuvA subunits (via domain III) on 2 adjacent RuvB subunits; this complex drives branch migration. In the full resolvosome a probable DNA-RuvA(4)-RuvB(12)-RuvC(2) complex forms which resolves the HJ.

The protein resides in the cytoplasm. The enzyme catalyses ATP + H2O = ADP + phosphate + H(+). The RuvA-RuvB-RuvC complex processes Holliday junction (HJ) DNA during genetic recombination and DNA repair, while the RuvA-RuvB complex plays an important role in the rescue of blocked DNA replication forks via replication fork reversal (RFR). RuvA specifically binds to HJ cruciform DNA, conferring on it an open structure. The RuvB hexamer acts as an ATP-dependent pump, pulling dsDNA into and through the RuvAB complex. RuvB forms 2 homohexamers on either side of HJ DNA bound by 1 or 2 RuvA tetramers; 4 subunits per hexamer contact DNA at a time. Coordinated motions by a converter formed by DNA-disengaged RuvB subunits stimulates ATP hydrolysis and nucleotide exchange. Immobilization of the converter enables RuvB to convert the ATP-contained energy into a lever motion, pulling 2 nucleotides of DNA out of the RuvA tetramer per ATP hydrolyzed, thus driving DNA branch migration. The RuvB motors rotate together with the DNA substrate, which together with the progressing nucleotide cycle form the mechanistic basis for DNA recombination by continuous HJ branch migration. Branch migration allows RuvC to scan DNA until it finds its consensus sequence, where it cleaves and resolves cruciform DNA. This is Holliday junction branch migration complex subunit RuvB from Acinetobacter baylyi (strain ATCC 33305 / BD413 / ADP1).